Reading from the N-terminus, the 387-residue chain is MENVVIVDAVRTPMGRSKGGAFRQVRAEDLSAHLMRAVLSRNPSLDAAEIDDIYWGCVQQTLEQGFNIARNASLLAEIPHSVPAVTVNRLCGSSMQALHDAARAIMVGDAHVSLIGGVEHMGHVPMNHGVDFHPGLSRSVAKAAGMMGLTAEMLAKMHNISRQMQDEFAARSHQRAHAATLAGYFKNEIIPTTGHDADGVLTRYDFDEVIRPETTVASLAALRPAFDPVNGTVTAGTSSALSDGASAMLLMSESRAKALGLKARARIRSMAVVGCDPSIMGYGPVPASKLALKRAGLSVQDIDLFELNEAFAAQSLPCIKDLGLLDSIDDKINLNGGAIALGHPLGCSGSRISTTLLNNMERRDVQFGLATMCIGLGQGIATVFERV.

The Acyl-thioester intermediate role is filled by cysteine 91. Active-site proton acceptor residues include histidine 343 and cysteine 373.

This sequence belongs to the thiolase-like superfamily. Thiolase family. As to quaternary structure, heterotetramer of two alpha chains (FadB) and two beta chains (FadA).

The protein localises to the cytoplasm. The catalysed reaction is an acyl-CoA + acetyl-CoA = a 3-oxoacyl-CoA + CoA. Its pathway is lipid metabolism; fatty acid beta-oxidation. Functionally, catalyzes the final step of fatty acid oxidation in which acetyl-CoA is released and the CoA ester of a fatty acid two carbons shorter is formed. The protein is 3-ketoacyl-CoA thiolase of Serratia proteamaculans (strain 568).